The primary structure comprises 727 residues: Catalase-peroxidase (727 aa).

The segment at 1 to 21 (MDAKVEDNIAGKCPMGHGRGP) is disordered. The tryptophyl-tyrosyl-methioninium (Trp-Tyr) (with M-243) cross-link spans 95–217 (WHAAGTYRIT…LGAVQMGLIY (123 aa)). His-96 acts as the Proton acceptor in catalysis. A cross-link (tryptophyl-tyrosyl-methioninium (Tyr-Met) (with W-95)) is located at residues 217-243 (YVNPEGPNGNPDPLASARDIRETFARM). Position 258 (His-258) interacts with heme b.

This sequence belongs to the peroxidase family. Peroxidase/catalase subfamily. As to quaternary structure, homodimer or homotetramer. Heme b serves as cofactor. Formation of the three residue Trp-Tyr-Met cross-link is important for the catalase, but not the peroxidase activity of the enzyme.

The enzyme catalyses H2O2 + AH2 = A + 2 H2O. It catalyses the reaction 2 H2O2 = O2 + 2 H2O. Its function is as follows. Bifunctional enzyme with both catalase and broad-spectrum peroxidase activity. Important for stationary phase survival. This Caulobacter vibrioides (strain ATCC 19089 / CIP 103742 / CB 15) (Caulobacter crescentus) protein is Catalase-peroxidase.